The chain runs to 586 residues: Kelch-like protein 7 (586 aa).

The BTB domain maps to 44-111; it reads CDVILTVQER…AYTARISVNS (68 aa). A BACK domain is found at 146 to 248; that stretch reads CLGISVLAEC…SKNFLSKTVQ (103 aa). Kelch repeat units lie at residues 294-336, 337-382, 383-430, 431-481, 483-528, and 530-575; these read RIAL…FWDN, VVYI…AAEG, KIYT…EANG, LIYV…FVKD, IFAV…AVGS, and IYVL…CVVD.

Homodimer. Component of the BCR(KLHL7) E3 ubiquitin ligase complex, at least composed of CUL3 and KLHL7 and RBX1.

Its subcellular location is the nucleus. The protein resides in the cytoplasm. It participates in protein modification; protein ubiquitination. In terms of biological role, substrate-specific adapter of a BCR (BTB-CUL3-RBX1) E3 ubiquitin ligase complex. The BCR(KLHL7) complex acts by mediating ubiquitination and subsequent degradation of substrate proteins. Probably mediates 'Lys-48'-linked ubiquitination. This is Kelch-like protein 7 (Klhl7) from Mus musculus (Mouse).